A 339-amino-acid polypeptide reads, in one-letter code: Mycothiol acetyltransferase (339 aa).

2 consecutive N-acetyltransferase domains span residues 8-174 (YEQL…QGLT) and 176-339 (LTYP…GELN). 1D-myo-inositol 2-(L-cysteinylamino)-2-deoxy-alpha-D-glucopyranoside is bound at residue Glu-39. Residue 85–87 (LAV) participates in acetyl-CoA binding. Glu-207, Lys-254, and Glu-270 together coordinate 1D-myo-inositol 2-(L-cysteinylamino)-2-deoxy-alpha-D-glucopyranoside. 274–276 (VCL) contacts acetyl-CoA. Tyr-308 is a binding site for 1D-myo-inositol 2-(L-cysteinylamino)-2-deoxy-alpha-D-glucopyranoside.

It belongs to the acetyltransferase family. MshD subfamily. As to quaternary structure, monomer.

It carries out the reaction 1D-myo-inositol 2-(L-cysteinylamino)-2-deoxy-alpha-D-glucopyranoside + acetyl-CoA = mycothiol + CoA + H(+). Its function is as follows. Catalyzes the transfer of acetyl from acetyl-CoA to desacetylmycothiol (Cys-GlcN-Ins) to form mycothiol. This is Mycothiol acetyltransferase from Corynebacterium urealyticum (strain ATCC 43042 / DSM 7109).